The primary structure comprises 730 residues: Ribosomal RNA large subunit methyltransferase K/L (730 aa).

Residues 46 to 157 (TAYRLCVWSR…RGEAILSLDL (112 aa)) form the THUMP domain. The disordered stretch occupies residues 394 to 418 (GERREAQPEGTEARQQVPQASEPAR).

It belongs to the methyltransferase superfamily. RlmKL family.

The protein resides in the cytoplasm. It carries out the reaction guanosine(2445) in 23S rRNA + S-adenosyl-L-methionine = N(2)-methylguanosine(2445) in 23S rRNA + S-adenosyl-L-homocysteine + H(+). The catalysed reaction is guanosine(2069) in 23S rRNA + S-adenosyl-L-methionine = N(2)-methylguanosine(2069) in 23S rRNA + S-adenosyl-L-homocysteine + H(+). Specifically methylates the guanine in position 2445 (m2G2445) and the guanine in position 2069 (m7G2069) of 23S rRNA. This Pseudomonas putida (strain ATCC 700007 / DSM 6899 / JCM 31910 / BCRC 17059 / LMG 24140 / F1) protein is Ribosomal RNA large subunit methyltransferase K/L.